Reading from the N-terminus, the 541-residue chain is Solute carrier family 2, facilitated glucose transporter member 10 (541 aa).

The Cytoplasmic portion of the chain corresponds to 1-15; the sequence is MGHSPPVLPLCASVS. The chain crosses the membrane as a helical span at residues 16 to 36; that stretch reads LLGGLTFGYELAVISGALLPL. Residues 37–48 lie on the Extracellular side of the membrane; the sequence is QLDFGLSCLEQE. A helical membrane pass occupies residues 49–69; the sequence is FLVGSLLLGALLASLVGGFLI. At 70–77 the chain is on the cytoplasmic side; it reads DCYGRKQA. Residues 78–98 traverse the membrane as a helical segment; it reads ILGSNLVLLAGSLTLGLAGSL. The Extracellular segment spans residues 99–106; that stretch reads AWLVLGRA. The chain crosses the membrane as a helical span at residues 107–127; that stretch reads VVGFAISLSSMACCIYVSELV. The Cytoplasmic portion of the chain corresponds to 128 to 134; it reads GPRQRGV. A helical transmembrane segment spans residues 135-155; the sequence is LVSLYEAGITVGILLSYALNY. At 156 to 166 the chain is on the extracellular side; it reads ALAGTPWGWRH. A helical transmembrane segment spans residues 167–187; it reads MFGWATAPAVLQSLSLLFLPA. The Cytoplasmic portion of the chain corresponds to 188–233; sequence GTDETATHKDLIPLQGGEAPKLGPGRPRYSFLDLFRARDNMRGRTT. Residues 234–254 form a helical membrane-spanning segment; that stretch reads VGLGLVLFQQLTGQPNVLCYA. D-glucose is bound at residue 242-243; it reads QQ. Over 255–269 the chain is Extracellular; the sequence is STIFSSVGFHGGSSA. The chain crosses the membrane as a helical span at residues 270-290; the sequence is VLASVGLGAVKVAATLTAMGL. Over 291–298 the chain is Cytoplasmic; the sequence is VDRAGRRA. Residues 299–319 form a helical membrane-spanning segment; it reads LLLAGCALMALSVSGIGLVSF. The Extracellular portion of the chain corresponds to 320-414; that stretch reads AVPMDSGPSC…HALLRWTALL (95 aa). A glycan (N-linked (GlcNAc...) asparagine) is linked at asparagine 334. Residues 340 to 388 form a disordered region; it reads GLPGDSGLLQDSSLPPIPRTNEDQREPILSTAKKTKPHPRSGDPSAPPR. The helical transmembrane segment at 415–435 threads the bilayer; it reads CLMVFVSAFSFGFGPVTWLVL. D-glucose is bound at residue tryptophan 432. Topologically, residues 436-445 are cytoplasmic; sequence SEIYPVEIRG. Residues 446–466 form a helical membrane-spanning segment; the sequence is RAFAFCNSFNWAANLFISLSF. Residues 467 to 476 lie on the Extracellular side of the membrane; the sequence is LDLIGTIGLS. Residues 477-497 form a helical membrane-spanning segment; that stretch reads WTFLLYGLTAVLGLGFIYLFV. The Cytoplasmic segment spans residues 498–541; that stretch reads PETKGQSLAEIDQQFQKRRFTLSFGHRQNSTGIPYSRIEISAAS.

The protein belongs to the major facilitator superfamily. Sugar transporter (TC 2.A.1.1) family. Glucose transporter subfamily. As to expression, widely expressed; highest levels in liver and pancreas.

Its subcellular location is the endomembrane system. It is found in the cytoplasm. The protein resides in the perinuclear region. It carries out the reaction D-glucose(out) = D-glucose(in). Facilitative glucose transporter required for the development of the cardiovascular system. The chain is Solute carrier family 2, facilitated glucose transporter member 10 from Homo sapiens (Human).